A 247-amino-acid polypeptide reads, in one-letter code: Segregation and condensation protein A (247 aa).

This sequence belongs to the ScpA family. Component of a cohesin-like complex composed of ScpA, ScpB and the Smc homodimer, in which ScpA and ScpB bind to the head domain of Smc. The presence of the three proteins is required for the association of the complex with DNA.

It is found in the cytoplasm. Functionally, participates in chromosomal partition during cell division. May act via the formation of a condensin-like complex containing Smc and ScpB that pull DNA away from mid-cell into both cell halves. The chain is Segregation and condensation protein A from Lactobacillus johnsonii (strain CNCM I-12250 / La1 / NCC 533).